A 318-amino-acid chain; its full sequence is Mitochondrial thiamine pyrophosphate carrier 1 (318 aa).

6 helical membrane-spanning segments follow: residues 12–28 (GTRRQVVLAGGIAGLVS), 91–107 (LMYVCYGAIQFAAYRTT), 125–141 (SFVAGATAGGLATASTY), 181–197 (GCSAAVGQIVPYMGLFF), 221–237 (AAGVVASVLAKTGVFPL), and 284–301 (GLTVSLFKAAPASAVTMW). Solcar repeat units follow at residues 12–110 (GTRR…TTQA), 120–206 (PPPA…LRPV), and 214–309 (PFGS…SLHY).

This sequence belongs to the mitochondrial carrier (TC 2.A.29) family.

The protein localises to the mitochondrion inner membrane. Its function is as follows. Mitochondrial transporter that mediates uptake of thiamine pyrophosphate (ThPP) into mitochondria. This Aspergillus oryzae (strain ATCC 42149 / RIB 40) (Yellow koji mold) protein is Mitochondrial thiamine pyrophosphate carrier 1 (tpc1).